The sequence spans 1472 residues: Vacuolar cation-transporting ATPase YPK9 (1472 aa).

Residue methionine 1 is modified to N-acetylmethionine. Polar residues-rich tracts occupy residues 1 to 12 (MDIPSSNQIQHG) and 72 to 87 (SFQS…SGNL). Disordered regions lie at residues 1-32 (MDIP…TATT), 71-115 (HSFQ…SRNP), and 179-273 (AKSY…DDVH). The Cytoplasmic segment spans residues 1–293 (MDIPSSNQIQ…YHEKFYPQYA (293 aa)). Threonine 95 is subject to Phosphothreonine. Composition is skewed to low complexity over residues 103-115 (SSAE…SRNP) and 211-222 (SATHSSSSLSRY). At serine 108 the chain carries Phosphoserine. Positions 234 to 243 (SQTDEILEDE) are enriched in acidic residues. Residues 294–315 (PNLHYQRFYIAEEDLVIGIAAY) traverse the membrane as a helical segment. At 316-321 (QTSKFW) the chain is on the vacuolar side. Residues 322–344 (YIIYNLCCFLTFGLVYLLTRWLP) form a helical membrane-spanning segment. Residues 345–488 (HLKVKLYGVK…INLRMKTTSE (144 aa)) lie on the Cytoplasmic side of the membrane. Residues 489–511 (ILFNEVLHPFYVFQVFSIILWGI) traverse the membrane as a helical segment. Over 512–514 (DEY) the chain is Vacuolar. A helical membrane pass occupies residues 515–533 (YYYAACIFLISVLSIFDSL). Over 534 to 693 (NEQKKVSRNL…PTGFKFYRDS (160 aa)) the chain is Cytoplasmic. The chain crosses the membrane as a helical span at residues 694-713 (FKYIGFMSLIAIFGFCVSCV). Over 714–726 (QFIKLGLDKKTMI) the chain is Vacuolar. A helical transmembrane segment spans residues 727–748 (LRALDIITIVVPPALPATLTIG). At 749–1244 (TNFALSRLKE…ALVTSFACFQ (496 aa)) the chain is on the cytoplasmic side. Residue aspartate 781 is the 4-aspartylphosphate intermediate of the active site. A phosphoserine mark is found at serine 1117 and serine 1120. Residues aspartate 1187 and aspartate 1191 each coordinate Mg(2+). A helical transmembrane segment spans residues 1245-1264 (YMSLYSAIQFITITILYSRG). Topologically, residues 1265 to 1271 (SNLGDFQ) are vacuolar. The helical transmembrane segment at 1272–1289 (FLYIDLLLIVPIAICMSW) threads the bilayer. The Cytoplasmic portion of the chain corresponds to 1290–1307 (SKSYEKIDKKRPSANLVS). The chain crosses the membrane as a helical span at residues 1308–1331 (PKILVPLLISVFLVFLFQFIPWII). The Vacuolar portion of the chain corresponds to 1332 to 1351 (VQKMSWYIKPIVGGDDAVQS). A helical membrane pass occupies residues 1352-1374 (SDNTVLFFVSNFQYILTAIVLSV). Residues 1375–1387 (GPPYREPMSKNFE) are Cytoplasmic-facing. A helical membrane pass occupies residues 1388-1407 (FIVDITVSIGASLLLMTLDT). The Vacuolar segment spans residues 1408 to 1423 (ESYLGKMLQLTPISNS). The chain crosses the membrane as a helical span at residues 1424 to 1446 (FTMFIIVWVILNYYAQLYIPPSI). The Cytoplasmic segment spans residues 1447-1472 (KGWLKKKKSSKKYKLLIQEEMKLKEV).

Belongs to the cation transport ATPase (P-type) (TC 3.A.3) family. Type V subfamily.

Its subcellular location is the vacuole membrane. The enzyme catalyses ATP + H2O = ADP + phosphate + H(+). Its function is as follows. Vacuolar transporter which plays a role in sequestration of divalent heavy metal ions. The chain is Vacuolar cation-transporting ATPase YPK9 (YPK9) from Saccharomyces cerevisiae (strain ATCC 204508 / S288c) (Baker's yeast).